The following is a 208-amino-acid chain: ATP-dependent Clp protease proteolytic subunit (208 aa).

The active-site Nucleophile is the serine 98. Residue histidine 123 is part of the active site.

It belongs to the peptidase S14 family. As to quaternary structure, fourteen ClpP subunits assemble into 2 heptameric rings which stack back to back to give a disk-like structure with a central cavity, resembling the structure of eukaryotic proteasomes.

It is found in the cytoplasm. The catalysed reaction is Hydrolysis of proteins to small peptides in the presence of ATP and magnesium. alpha-casein is the usual test substrate. In the absence of ATP, only oligopeptides shorter than five residues are hydrolyzed (such as succinyl-Leu-Tyr-|-NHMec, and Leu-Tyr-Leu-|-Tyr-Trp, in which cleavage of the -Tyr-|-Leu- and -Tyr-|-Trp bonds also occurs).. In terms of biological role, cleaves peptides in various proteins in a process that requires ATP hydrolysis. Has a chymotrypsin-like activity. Plays a major role in the degradation of misfolded proteins. In Wolbachia sp. subsp. Brugia malayi (strain TRS), this protein is ATP-dependent Clp protease proteolytic subunit.